The sequence spans 319 residues: 3-oxoacyl-[acyl-carrier-protein] reductase, chloroplastic (319 aa).

A chloroplast-targeting transit peptide spans 1–57 (MAAAVAAPRLISLKAVAKLGFREISQIRQLAPLHSAIPHFGMLRCRSRQPFSTSVVK). An N-acetylalanine modification is found at A58. An NADP(+)-binding site is contributed by 81-105 (ITGASRGIGKAIALALGKAGCKVLV). Residue S213 coordinates substrate. Y226 (proton acceptor) is an active-site residue.

It belongs to the short-chain dehydrogenases/reductases (SDR) family. In terms of assembly, homotetramer.

It is found in the plastid. Its subcellular location is the chloroplast. The catalysed reaction is a (3R)-hydroxyacyl-[ACP] + NADP(+) = a 3-oxoacyl-[ACP] + NADPH + H(+). It participates in lipid metabolism; fatty acid biosynthesis. This is 3-oxoacyl-[acyl-carrier-protein] reductase, chloroplastic from Arabidopsis thaliana (Mouse-ear cress).